Reading from the N-terminus, the 719-residue chain is Polyribonucleotide nucleotidyltransferase (719 aa).

The Mg(2+) site is built by Asp-507 and Asp-513. Residues 573-633 (PKLELFSVDP…EQIKAAKDYI (61 aa)) form the KH domain. One can recognise an S1 motif domain in the interval 658–719 (GQEFQGIVKK…NGKISVDLCE (62 aa)).

Belongs to the polyribonucleotide nucleotidyltransferase family. The cofactor is Mg(2+).

Its subcellular location is the cytoplasm. It carries out the reaction RNA(n+1) + phosphate = RNA(n) + a ribonucleoside 5'-diphosphate. Its function is as follows. Involved in mRNA degradation. Catalyzes the phosphorolysis of single-stranded polyribonucleotides processively in the 3'- to 5'-direction. The sequence is that of Polyribonucleotide nucleotidyltransferase from Campylobacter jejuni subsp. jejuni serotype O:23/36 (strain 81-176).